The primary structure comprises 261 residues: Kallikrein 1-related peptidase b26 (261 aa).

The N-terminal stretch at 1 to 18 (MWFLILFPALSLGGIDAA) is a signal peptide. The propeptide at 19–24 (PPLQSR) is activation peptide. Positions 25-258 (VVGGFNCEKN…FNSWIKDTMM (234 aa)) constitute a Peptidase S1 domain. Cystine bridges form between Cys-31–Cys-173, Cys-50–Cys-66, Cys-152–Cys-219, Cys-184–Cys-198, and Cys-209–Cys-234. His-65 acts as the Charge relay system in catalysis. A glycan (N-linked (GlcNAc...) asparagine) is linked at Asn-102. The active-site Charge relay system is Asp-120. The active-site Charge relay system is Ser-213.

Belongs to the peptidase S1 family. Kallikrein subfamily.

The enzyme catalyses Preferential cleavage of Arg-|-Xaa bonds in small molecule substrates. Highly selective action to release kallidin (lysyl-bradykinin) from kininogen involves hydrolysis of Met-|-Xaa or Leu-|-Xaa.. In terms of biological role, glandular kallikreins cleave Met-Lys and Arg-Ser bonds in kininogen to release Lys-bradykinin. Prorenin-converting enzyme cleaves mouse REN-2 prorenin at a dibasic site to yield mature renin. The polypeptide is Kallikrein 1-related peptidase b26 (Klk1b26) (Mus musculus (Mouse)).